Reading from the N-terminus, the 67-residue chain is LPS-assembly lipoprotein LptM (67 aa).

The first 19 residues, 1 to 19, serve as a signal peptide directing secretion; sequence MKNVFKALTVLLTLFSLTG. A lipid anchor (N-palmitoyl cysteine) is attached at C20. Residue C20 is the site of S-diacylglycerol cysteine attachment. The tract at residues 26–67 is disordered; it reads LYFPPADKNAPPPTKPVETQTQSTVPDKNDRATGDGPSQVNY. The span at 42–51 shows a compositional bias: polar residues; it reads VETQTQSTVP.

The protein belongs to the LptM family. Interacts with the outer membrane embedded portion of the LPS translocon formed by LptD and LptE (LptDE).

The protein localises to the cell outer membrane. Functionally, component of the lipopolysaccharide (LPS) transport (Lpt) pathway that promotes efficient assembly of the outer membrane LPS translocon (LptDE) by the BAM complex. Facilitates oxidative maturation of LptD by stabilizing a conformation of the LPS translocon in which LptD can efficiently acquire native disulfide bonds, thereby activating the LPS translocon. The chain is LPS-assembly lipoprotein LptM from Escherichia coli O157:H7.